The chain runs to 338 residues: Putative ankyrin repeat protein CBU_0781 (338 aa).

Positions 1 to 31 are disordered; that stretch reads MSRRETPTSTISSTPTGTRTPRRRLSRKGHP. The segment covering 7 to 19 has biased composition (low complexity); that stretch reads PTSTISSTPTGTR. Positions 20–31 are enriched in basic residues; that stretch reads TPRRRLSRKGHP. ANK repeat units follow at residues 92 to 124 and 125 to 157; these read QGDTLLIKAAKKGKFLIAKALLEAGAYKEIVNK and LGETALICAVRHFRVETLDLLIQYHADVKIKYK. Positions 197-242 form a coiled coil; it reads SQIMASDKEIDEIIRNARNLQIIKKEKREAEERARTKKSKQITLQR. The disordered stretch occupies residues 319–338; that stretch reads KKEDTTLSRNNSLSCLSSPR. A compositionally biased stretch (low complexity) spans 325-338; that stretch reads LSRNNSLSCLSSPR.

In Coxiella burnetii (strain RSA 493 / Nine Mile phase I), this protein is Putative ankyrin repeat protein CBU_0781.